The primary structure comprises 491 residues: NADPH:adrenodoxin oxidoreductase, mitochondrial (491 aa).

A mitochondrion-targeting transit peptide spans 1–32 (MASRCWRWWGWSAWPRTRLPPAGSTPSFCHHF). Residues alanine 49, glutamate 69, leucine 77, and valine 113 each coordinate FAD. NADP(+) is bound by residues 184 to 187 (QGNV), 228 to 229 (RR), and glutamate 240. Residues serine 310 and serine 317 each carry the phosphoserine modification. FAD-binding positions include tryptophan 398 and 405–407 (GVI). Glycine 405 contacts NADP(+).

It belongs to the ferredoxin--NADP reductase type 1 family. As to quaternary structure, monomer. Interacts directly with FDX1. The cofactor is FAD.

The protein localises to the mitochondrion. Its subcellular location is the mitochondrion inner membrane. The catalysed reaction is 2 reduced [adrenodoxin] + NADP(+) + H(+) = 2 oxidized [adrenodoxin] + NADPH. It carries out the reaction 2 reduced [2Fe-2S]-[ferredoxin] + NADP(+) + H(+) = 2 oxidized [2Fe-2S]-[ferredoxin] + NADPH. It participates in steroid metabolism; cholesterol metabolism. In terms of biological role, serves as the first electron transfer protein in all the mitochondrial P450 systems including cholesterol side chain cleavage in all steroidogenic tissues, steroid 11-beta hydroxylation in the adrenal cortex, 25-OH-vitamin D3-24 hydroxylation in the kidney, and sterol C-27 hydroxylation in the liver. Also acts as a ferredoxin--NADP(+) reductase essential for coenzyme Q biosynthesis: together with FDX2, transfers the electrons required for the hydroxylation reaction performed by COQ6. This chain is NADPH:adrenodoxin oxidoreductase, mitochondrial, found in Homo sapiens (Human).